Reading from the N-terminus, the 363-residue chain is tRNA(Met) cytidine acetate ligase (363 aa).

ATP-binding positions include 7 to 20 (IAEFNPFHNGHKYL), Gly-96, Asn-152, and Arg-175.

It belongs to the TmcAL family.

The protein localises to the cytoplasm. The enzyme catalyses cytidine(34) in elongator tRNA(Met) + acetate + ATP = N(4)-acetylcytidine(34) in elongator tRNA(Met) + AMP + diphosphate. Catalyzes the formation of N(4)-acetylcytidine (ac(4)C) at the wobble position of elongator tRNA(Met), using acetate and ATP as substrates. First activates an acetate ion to form acetyladenylate (Ac-AMP) and then transfers the acetyl group to tRNA to form ac(4)C34. The chain is tRNA(Met) cytidine acetate ligase from Streptococcus thermophilus (strain ATCC BAA-250 / LMG 18311).